We begin with the raw amino-acid sequence, 355 residues long: Holliday junction branch migration complex subunit RuvB (355 aa).

Positions 4–190 (TDKLAAERII…FGIVARLEFY (187 aa)) are large ATPase domain (RuvB-L). ATP contacts are provided by residues Leu29, Arg30, Gly71, Lys74, Thr75, Thr76, 137–139 (EDY), Arg180, Tyr190, and Arg227. Thr75 provides a ligand contact to Mg(2+). Residues 191–261 (NAEQLARIVT…VADAALKMLD (71 aa)) form a small ATPAse domain (RuvB-S) region. The head domain (RuvB-H) stretch occupies residues 264 to 355 (AVGFDLMDRK…LPGLWDSAAT (92 aa)). Positions 300, 319, and 324 each coordinate DNA.

This sequence belongs to the RuvB family. As to quaternary structure, homohexamer. Forms an RuvA(8)-RuvB(12)-Holliday junction (HJ) complex. HJ DNA is sandwiched between 2 RuvA tetramers; dsDNA enters through RuvA and exits via RuvB. An RuvB hexamer assembles on each DNA strand where it exits the tetramer. Each RuvB hexamer is contacted by two RuvA subunits (via domain III) on 2 adjacent RuvB subunits; this complex drives branch migration. In the full resolvosome a probable DNA-RuvA(4)-RuvB(12)-RuvC(2) complex forms which resolves the HJ.

The protein resides in the cytoplasm. It carries out the reaction ATP + H2O = ADP + phosphate + H(+). The RuvA-RuvB-RuvC complex processes Holliday junction (HJ) DNA during genetic recombination and DNA repair, while the RuvA-RuvB complex plays an important role in the rescue of blocked DNA replication forks via replication fork reversal (RFR). RuvA specifically binds to HJ cruciform DNA, conferring on it an open structure. The RuvB hexamer acts as an ATP-dependent pump, pulling dsDNA into and through the RuvAB complex. RuvB forms 2 homohexamers on either side of HJ DNA bound by 1 or 2 RuvA tetramers; 4 subunits per hexamer contact DNA at a time. Coordinated motions by a converter formed by DNA-disengaged RuvB subunits stimulates ATP hydrolysis and nucleotide exchange. Immobilization of the converter enables RuvB to convert the ATP-contained energy into a lever motion, pulling 2 nucleotides of DNA out of the RuvA tetramer per ATP hydrolyzed, thus driving DNA branch migration. The RuvB motors rotate together with the DNA substrate, which together with the progressing nucleotide cycle form the mechanistic basis for DNA recombination by continuous HJ branch migration. Branch migration allows RuvC to scan DNA until it finds its consensus sequence, where it cleaves and resolves cruciform DNA. The polypeptide is Holliday junction branch migration complex subunit RuvB (Paraburkholderia xenovorans (strain LB400)).